Consider the following 105-residue polypeptide: Met repressor (105 aa).

It belongs to the MetJ family. As to quaternary structure, homodimer.

The protein localises to the cytoplasm. In terms of biological role, this regulatory protein, when combined with SAM (S-adenosylmethionine) represses the expression of the methionine regulon and of enzymes involved in SAM synthesis. The sequence is that of Met repressor from Proteus mirabilis (strain HI4320).